The sequence spans 89 residues: Small ribosomal subunit protein bS20 (89 aa).

The segment at 1–28 (MTLANIKSAKKRAVQSEKSRQHNASQRS) is disordered.

Belongs to the bacterial ribosomal protein bS20 family.

In terms of biological role, binds directly to 16S ribosomal RNA. The chain is Small ribosomal subunit protein bS20 from Mannheimia succiniciproducens (strain KCTC 0769BP / MBEL55E).